The chain runs to 337 residues: Heme A synthase (337 aa).

The next 5 helical transmembrane spans lie at 6-26 (ITKW…IGGI), 87-107 (FIHR…VIYF), 119-139 (LPYI…WYMV), 154-174 (LAFH…QLIK), and 192-212 (LIFS…GALV). His256 is a binding site for heme. The next 3 helical transmembrane spans lie at 258–278 (LVGY…LKIE), 285–305 (IAYF…ITLL), and 308–328 (VPII…SVII). Residue His316 coordinates heme.

The protein belongs to the COX15/CtaA family. Type 2 subfamily. As to quaternary structure, interacts with CtaB. It depends on heme b as a cofactor.

It is found in the cell membrane. It carries out the reaction Fe(II)-heme o + 2 A + H2O = Fe(II)-heme a + 2 AH2. The protein operates within porphyrin-containing compound metabolism; heme A biosynthesis; heme A from heme O: step 1/1. In terms of biological role, catalyzes the conversion of heme O to heme A by two successive hydroxylations of the methyl group at C8. The first hydroxylation forms heme I, the second hydroxylation results in an unstable dihydroxymethyl group, which spontaneously dehydrates, resulting in the formyl group of heme A. The protein is Heme A synthase of Rickettsia rickettsii (strain Iowa).